The following is a 215-amino-acid chain: Nascent polypeptide-associated complex subunit alpha (215 aa).

The tract at residues 1 to 81 (MPGEATETVP…SEKKARKAMS (81 aa)) is disordered. Residues 9-28 (VPATEQELPQPQAETGSGTE) show a composition bias toward polar residues. Positions 29–42 (SDSDESVPELEEQD) are enriched in acidic residues. Ser43 carries the phosphoserine; by ILK1 modification. Low complexity predominate over residues 44 to 57 (TQATTQQAQLAAAA). The interval 69 to 80 (QSRSEKKARKAM) is required for DNA-binding. In terms of domain architecture, NAC-A/B spans 70-135 (SRSEKKARKA…AKIEDLSQQA (66 aa)). Residues 93-108 (RVTIRKSKNILFVITK) are RNA/DNA-binding. The residue at position 132 (Ser132) is a Phosphoserine. Lys142 is modified (N6-acetyllysine; alternate). Lys142 is covalently cross-linked (Glycyl lysine isopeptide (Lys-Gly) (interchain with G-Cter in SUMO2); alternate). A Phosphothreonine; by GSK3-beta modification is found at Thr159. The residue at position 161 (Thr161) is a Phosphothreonine. Phosphoserine is present on residues Ser166, Ser186, Ser191, and Ser203. One can recognise a UBA domain in the interval 176–213 (VEVKDIELVMSQANVSRAKAVRALKNNSNDIVNAIMEL).

The protein belongs to the NAC-alpha family. In terms of assembly, part of the nascent polypeptide-associated complex (NAC), which is a heterodimer of NACA and BTF3 (via NAC-A/B domains). NAC associates with ribosomes through the BTF3/NACB subunit and contacts the ribosomal protein L23, which is positioned near the exiting site. Both subunits can contact nascent polypeptide chains. NACA may also form homodimers, and only this form binds DNA. Interacts with TBP and JUN. Phosphorylation of Ser-43 by ILK during cell adhesion may promote nuclear localization. Phosphorylation of Thr-159 by GSK3B may promote proteasome mediated degradation.

It localises to the cytoplasm. The protein resides in the nucleus. Functionally, prevents inappropriate targeting of non-secretory polypeptides to the endoplasmic reticulum (ER). Binds to nascent polypeptide chains as they emerge from the ribosome and blocks their interaction with the signal recognition particle (SRP), which normally targets nascent secretory peptides to the ER. Also reduces the inherent affinity of ribosomes for protein translocation sites in the ER membrane (M sites). May act as a specific coactivator for JUN, binding to DNA and stabilizing the interaction of JUN homodimers with target gene promoters. The protein is Nascent polypeptide-associated complex subunit alpha (NACA) of Pongo abelii (Sumatran orangutan).